The following is a 198-amino-acid chain: RxLR effector protein Htp1 (198 aa).

The N-terminal stretch at 1 to 23 (MRIHHPLTLAALCVVLHESLGAA) is a signal peptide. The short motif at 46-49 (RHLR) is the RxLR element. Disordered stretches follow at residues 48 to 101 (LRSD…TPMK) and 115 to 198 (TKNA…PTFD). N70 is a glycosylation site (N-linked (GlcNAc...) asparagine). The segment covering 70 to 91 (NNSQEQATTGNSVETNQVPSTE) has biased composition (polar residues). The segment covering 126-137 (DDDDSDFSDDDV) has biased composition (acidic residues). Residues 173–191 (APTNAPTGTDAPTDAPTDA) show a composition bias toward low complexity.

It belongs to the RxLR effector family. As to quaternary structure, interacts with the effector Htp3 within the host cells.

The protein resides in the secreted. The protein localises to the host cell. In terms of biological role, effector involved in the disease saprolegniosis in salmonids and other freshwater fish, resulting in considerable economic losses in aquaculture. Within the host fish cells, Htp1 is involved in the uptake of the S.parasitica effector Htp3 at a neutral pH (pH 7.5) and its release from vesicles into host cytosol where it degrades nucleic acids. This Saprolegnia parasitica (strain CBS 223.65) protein is RxLR effector protein Htp1.